Here is a 231-residue protein sequence, read N- to C-terminus: Putative transglycosylase H16_A0665 (231 aa).

A helical transmembrane segment spans residues 8–28 (FIKLLVLAVIGGALLAAIAIL).

This sequence belongs to the glycosyltransferase 51 family.

The protein resides in the secreted. The protein localises to the membrane. It functions in the pathway cell wall biogenesis; peptidoglycan biosynthesis. Cell wall formation. This chain is Putative transglycosylase H16_A0665, found in Cupriavidus necator (strain ATCC 17699 / DSM 428 / KCTC 22496 / NCIMB 10442 / H16 / Stanier 337) (Ralstonia eutropha).